We begin with the raw amino-acid sequence, 212 residues long: Nitrile hydratase subunit beta (212 aa).

This sequence belongs to the nitrile hydratase subunit beta family. In terms of assembly, heterodimer of an alpha and a beta chain.

It catalyses the reaction an aliphatic primary amide = an aliphatic nitrile + H2O. Functionally, NHase catalyzes the hydration of various nitrile compounds to the corresponding amides. This is Nitrile hydratase subunit beta (nthB) from Rhodococcus erythropolis (Arthrobacter picolinophilus).